A 179-amino-acid chain; its full sequence is Ubiquitin-conjugating enzyme E2 C (179 aa).

A compositionally biased stretch (polar residues) spans 1–14 (MASQNRDPAATSVT). The interval 1-31 (MASQNRDPAATSVTAARKGAEPSGGAARGPV) is disordered. A2 carries the post-translational modification N-acetylalanine. S3 is subject to Phosphoserine. Residues 30–175 (PVGKRLQQEL…LQETYSKQVT (146 aa)) enclose the UBC core domain. The active-site Glycyl thioester intermediate is C114.

The protein belongs to the ubiquitin-conjugating enzyme family. In terms of assembly, component of the APC/C complex, composed of at least 14 distinct subunits that assemble into a complex of at least 19 chains with a combined molecular mass of around 1.2 MDa. Within this complex, directly interacts with ANAPC2. Post-translationally, autoubiquitinated by the APC/C complex, leading to its degradation by the proteasome. Its degradation plays a central role in APC/C regulation, allowing cyclin-A accumulation before S phase entry. APC/C substrates inhibit the autoubiquitination of UBE2C/UBCH10 but not its E2 function, hence APC/C remaining active until its substrates have been destroyed.

The catalysed reaction is S-ubiquitinyl-[E1 ubiquitin-activating enzyme]-L-cysteine + [E2 ubiquitin-conjugating enzyme]-L-cysteine = [E1 ubiquitin-activating enzyme]-L-cysteine + S-ubiquitinyl-[E2 ubiquitin-conjugating enzyme]-L-cysteine.. It carries out the reaction S-ubiquitinyl-[E1 ubiquitin-activating enzyme]-L-cysteine + [acceptor protein]-L-lysine = [E1 ubiquitin-activating enzyme]-L-cysteine + N(6)-monoubiquitinyl-[acceptor protein]-L-lysine.. Its pathway is protein modification; protein ubiquitination. Functionally, accepts ubiquitin from the E1 complex and catalyzes its covalent attachment to other proteins. In vitro catalyzes 'Lys-11'- and 'Lys-48'-linked polyubiquitination. Acts as an essential factor of the anaphase promoting complex/cyclosome (APC/C), a cell cycle-regulated ubiquitin ligase that controls progression through mitosis. Acts by initiating 'Lys-11'-linked polyubiquitin chains on APC/C substrates, leading to the degradation of APC/C substrates by the proteasome and promoting mitotic exit. The chain is Ubiquitin-conjugating enzyme E2 C (UBE2C) from Macaca fascicularis (Crab-eating macaque).